A 304-amino-acid chain; its full sequence is UDP-N-acetylenolpyruvoylglucosamine reductase (304 aa).

The region spanning 34–198 is the FAD-binding PCMH-type domain; the sequence is IGGKADFLVW…LEVVFALRPG (165 aa). Arg177 is an active-site residue. Catalysis depends on Ser227, which acts as the Proton donor. Residue Glu297 is part of the active site.

The protein belongs to the MurB family. FAD is required as a cofactor.

The protein resides in the cytoplasm. It catalyses the reaction UDP-N-acetyl-alpha-D-muramate + NADP(+) = UDP-N-acetyl-3-O-(1-carboxyvinyl)-alpha-D-glucosamine + NADPH + H(+). The protein operates within cell wall biogenesis; peptidoglycan biosynthesis. Functionally, cell wall formation. The chain is UDP-N-acetylenolpyruvoylglucosamine reductase from Geobacillus kaustophilus (strain HTA426).